The sequence spans 1345 residues: CRISPR-associated endonuclease Cas9 (1345 aa).

Asp-10 serves as the catalytic For RuvC-like nuclease domain. Asp-10, Glu-762, and Glu-766 together coordinate Mg(2+). An HNH Cas9-type domain is found at 770 to 921 (TNQGRRNSQQ…DKAGFIKRQL (152 aa)). Residue His-840 is the Proton acceptor for HNH nuclease domain of the active site. Residue His-983 coordinates Mg(2+).

The protein belongs to the CRISPR-associated protein Cas9 family. Subtype II-A subfamily. In terms of assembly, monomer. Binds crRNA and tracrRNA. The cofactor is Mg(2+).

Its function is as follows. CRISPR (clustered regularly interspaced short palindromic repeat) is an adaptive immune system that provides protection against mobile genetic elements (viruses, transposable elements and conjugative plasmids). CRISPR clusters contain spacers, sequences complementary to antecedent mobile elements, and target invading nucleic acids. CRISPR clusters are transcribed and processed into CRISPR RNA (crRNA). In type II CRISPR systems correct processing of pre-crRNA requires a trans-encoded small RNA (tracrRNA), endogenous ribonuclease 3 (rnc) and this protein. The tracrRNA serves as a guide for ribonuclease 3-aided processing of pre-crRNA. Subsequently Cas9/crRNA/tracrRNA endonucleolytically cleaves linear or circular dsDNA target complementary to the spacer; Cas9 is inactive in the absence of the 2 guide RNAs (gRNA). Cas9 recognizes the protospacer adjacent motif (PAM) in the CRISPR repeat sequences to help distinguish self versus nonself, as targets within the bacterial CRISPR locus do not have PAMs. PAM recognition is also required for catalytic activity. Complements the gRNA coprocessing defect in a cas9 deletion in S.pyogenes strain 370 and cuts target plasmid in Cas9:gRNAs mixing experiments with S.thermophilus CRISPR3 from strain LMD-9. This chain is CRISPR-associated endonuclease Cas9, found in Streptococcus mutans serotype c (strain ATCC 700610 / UA159).